The primary structure comprises 163 residues: MVTAVFPGSFDPITRGHLDMIQRASRLVDRLIVAVMVNTSKQPLFTMTEKVAMISDELTGLPNVEVQAATGLTVDFMASVHATVLVRGLRNEQDFGYERDIAWMNKSLDETIETICLIARPPYAYFSSSLIKEVAKMGADVSKYVPTAVAQKLHQRLGTDQHD.

Residue S9 participates in substrate binding. ATP is bound by residues 9 to 10 (SF) and H17. Residues K41, T73, and R87 each coordinate substrate. Residues 88-90 (GLR), E98, and 123-129 (YAYFSSS) contribute to the ATP site.

Belongs to the bacterial CoaD family. As to quaternary structure, homohexamer. Requires Mg(2+) as cofactor.

The protein resides in the cytoplasm. It catalyses the reaction (R)-4'-phosphopantetheine + ATP + H(+) = 3'-dephospho-CoA + diphosphate. It functions in the pathway cofactor biosynthesis; coenzyme A biosynthesis; CoA from (R)-pantothenate: step 4/5. In terms of biological role, reversibly transfers an adenylyl group from ATP to 4'-phosphopantetheine, yielding dephospho-CoA (dPCoA) and pyrophosphate. The sequence is that of Phosphopantetheine adenylyltransferase from Lactiplantibacillus plantarum (strain ATCC BAA-793 / NCIMB 8826 / WCFS1) (Lactobacillus plantarum).